A 95-amino-acid chain; its full sequence is Small ribosomal subunit protein uS19 (95 aa).

This sequence belongs to the universal ribosomal protein uS19 family.

Its function is as follows. Protein S19 forms a complex with S13 that binds strongly to the 16S ribosomal RNA. The chain is Small ribosomal subunit protein uS19 from Bdellovibrio bacteriovorus (strain ATCC 15356 / DSM 50701 / NCIMB 9529 / HD100).